The sequence spans 305 residues: Virulence plasmid integrase pGP7-D (305 aa).

Positions 13-99 (LTFGDASEIW…CYISFTKFLY (87 aa)) constitute a Core-binding (CB) domain. Positions 127-305 (IKTESISKQE…SPLVQTPPIL (179 aa)) constitute a Tyr recombinase domain. Active-site residues include Lys188 and Arg257. Residue Tyr289 is the O-(3'-phospho-DNA)-tyrosine intermediate of the active site.

Belongs to the 'phage' integrase family.

This is Virulence plasmid integrase pGP7-D from Chlamydia trachomatis serovar L2 (strain ATCC VR-902B / DSM 19102 / 434/Bu).